Here is a 287-residue protein sequence, read N- to C-terminus: Lectin 10 (287 aa).

Residues 1-11 (MALSNLKSNRT) are Cytoplasmic-facing. The helical transmembrane segment at 12 to 31 (LSSSLITIFIISLFLQYHNI) threads the bilayer. The Extracellular portion of the chain corresponds to 32 to 287 (KSQSSWQSRQ…IINWSFESAL (256 aa)). N-linked (GlcNAc...) asparagine glycans are attached at residues Asn124, Asn147, Asn243, and Asn280.

The protein belongs to the leguminous lectin family.

It is found in the membrane. Its function is as follows. May be involved in arbuscular mycorrhizal (AM) symbiosis with AM fungi. The sequence is that of Lectin 10 from Medicago truncatula (Barrel medic).